Consider the following 620-residue polypeptide: Threonine--tRNA ligase (620 aa).

Positions 1–42 constitute a TGS domain; sequence MFEIAKGISNSLAKKSVGAKVDGKNVDMSYILDHDAEVEFID. Positions 224 to 515 are catalytic; that stretch reads DHRKLGKELE…LIEHYAGAFP (292 aa). Residues Cys-315, His-366, and His-492 each coordinate Zn(2+).

Belongs to the class-II aminoacyl-tRNA synthetase family. In terms of assembly, homodimer. The cofactor is Zn(2+).

The protein localises to the cytoplasm. It catalyses the reaction tRNA(Thr) + L-threonine + ATP = L-threonyl-tRNA(Thr) + AMP + diphosphate + H(+). Functionally, catalyzes the attachment of threonine to tRNA(Thr) in a two-step reaction: L-threonine is first activated by ATP to form Thr-AMP and then transferred to the acceptor end of tRNA(Thr). Also edits incorrectly charged L-seryl-tRNA(Thr). This chain is Threonine--tRNA ligase, found in Fusobacterium nucleatum subsp. nucleatum (strain ATCC 25586 / DSM 15643 / BCRC 10681 / CIP 101130 / JCM 8532 / KCTC 2640 / LMG 13131 / VPI 4355).